Here is a 451-residue protein sequence, read N- to C-terminus: Phosphoglucosamine mutase (451 aa).

The Phosphoserine intermediate role is filled by Ser-102. Residues Ser-102, Asp-243, Asp-245, and Asp-247 each coordinate Mg(2+). Ser-102 is subject to Phosphoserine.

The protein belongs to the phosphohexose mutase family. It depends on Mg(2+) as a cofactor. In terms of processing, activated by phosphorylation.

The enzyme catalyses alpha-D-glucosamine 1-phosphate = D-glucosamine 6-phosphate. In terms of biological role, catalyzes the conversion of glucosamine-6-phosphate to glucosamine-1-phosphate. This chain is Phosphoglucosamine mutase, found in Brucella canis (strain ATCC 23365 / NCTC 10854 / RM-666).